A 257-amino-acid polypeptide reads, in one-letter code: Diaminopimelate epimerase (257 aa).

Substrate contacts are provided by N13, Q46, and N66. C75 serves as the catalytic Proton donor. Substrate contacts are provided by residues 76-77, N145, N175, and 193-194; these read GN and ER. The active-site Proton acceptor is the C202. A substrate-binding site is contributed by 203–204; it reads GS.

It belongs to the diaminopimelate epimerase family. In terms of assembly, homodimer.

It is found in the cytoplasm. The enzyme catalyses (2S,6S)-2,6-diaminopimelate = meso-2,6-diaminopimelate. Its pathway is amino-acid biosynthesis; L-lysine biosynthesis via DAP pathway; DL-2,6-diaminopimelate from LL-2,6-diaminopimelate: step 1/1. Its function is as follows. Catalyzes the stereoinversion of LL-2,6-diaminopimelate (L,L-DAP) to meso-diaminopimelate (meso-DAP), a precursor of L-lysine and an essential component of the bacterial peptidoglycan. The protein is Diaminopimelate epimerase of Gluconobacter oxydans (strain 621H) (Gluconobacter suboxydans).